The sequence spans 484 residues: Aspartyl/glutamyl-tRNA(Asn/Gln) amidotransferase subunit B (484 aa).

It belongs to the GatB/GatE family. GatB subfamily. As to quaternary structure, heterotrimer of A, B and C subunits.

The catalysed reaction is L-glutamyl-tRNA(Gln) + L-glutamine + ATP + H2O = L-glutaminyl-tRNA(Gln) + L-glutamate + ADP + phosphate + H(+). It carries out the reaction L-aspartyl-tRNA(Asn) + L-glutamine + ATP + H2O = L-asparaginyl-tRNA(Asn) + L-glutamate + ADP + phosphate + 2 H(+). In terms of biological role, allows the formation of correctly charged Asn-tRNA(Asn) or Gln-tRNA(Gln) through the transamidation of misacylated Asp-tRNA(Asn) or Glu-tRNA(Gln) in organisms which lack either or both of asparaginyl-tRNA or glutaminyl-tRNA synthetases. The reaction takes place in the presence of glutamine and ATP through an activated phospho-Asp-tRNA(Asn) or phospho-Glu-tRNA(Gln). The polypeptide is Aspartyl/glutamyl-tRNA(Asn/Gln) amidotransferase subunit B (Anaeromyxobacter sp. (strain K)).